Consider the following 353-residue polypeptide: L-tryptophan dehydrogenase (353 aa).

R44 contributes to the NAD(+) binding site. The active-site Proton donor/acceptor is the K80. Residues D114, T146, 176–181 (GLGNVG), K204, and 255–257 (AAN) each bind NAD(+).

It belongs to the Glu/Leu/Phe/Val dehydrogenases family. In terms of assembly, homodimer.

It carries out the reaction L-tryptophan + NAD(+) + H2O = indole-3-pyruvate + NH4(+) + NADH + H(+). Its activity is regulated as follows. Highly susceptible to inhibition by indole-3-pyruvate. Activity is not affected by the presence of metal ions, EDTA, KCl or DMSO. Functionally, catalyzes the reversible oxidative deamination of L-tryptophan to indole-3-pyruvate in the presence of NAD(+). Shows weak activity with L-phenylalanine, but cannot use other L-amino acids and D-Trp. Cannot use NADP(+) for oxidative deamination of L-Trp, and shows only weak activity with NADPH for reductive amination of indole-3-pyruvate. Involved in the biosynthesis of scytonemin, a cyanobacterial radiation-absorbing pigment. This is L-tryptophan dehydrogenase from Nostoc punctiforme.